A 165-amino-acid chain; its full sequence is Lipoprotein signal peptidase (165 aa).

3 consecutive transmembrane segments (helical) span residues 9-29, 65-85, and 100-120; these read SFLW…YFVV, WQKY…CYFL, and ALII…GFVV. Catalysis depends on residues Asp121 and Asp139. The helical transmembrane segment at 134–154 threads the bilayer; the sequence is VFNVADIAISLGAGLMILDAF.

Belongs to the peptidase A8 family.

Its subcellular location is the cell inner membrane. The enzyme catalyses Release of signal peptides from bacterial membrane prolipoproteins. Hydrolyzes -Xaa-Yaa-Zaa-|-(S,diacylglyceryl)Cys-, in which Xaa is hydrophobic (preferably Leu), and Yaa (Ala or Ser) and Zaa (Gly or Ala) have small, neutral side chains.. Its pathway is protein modification; lipoprotein biosynthesis (signal peptide cleavage). Functionally, this protein specifically catalyzes the removal of signal peptides from prolipoproteins. The polypeptide is Lipoprotein signal peptidase (Pasteurella multocida (strain Pm70)).